Here is a 215-residue protein sequence, read N- to C-terminus: Pyrophosphate-energized proton pump 2 (215 aa).

The next 5 helical transmembrane spans lie at 16-36 (VYPL…TFFV), 51-71 (GLIA…YATV), 86-106 (GTNL…IVVI), 136-156 (GLAV…GGII), and 164-184 (LFGT…IVAL).

This sequence belongs to the H(+)-translocating pyrophosphatase (TC 3.A.10) family. As to quaternary structure, homodimer. Mg(2+) serves as cofactor.

It is found in the cell inner membrane. It catalyses the reaction diphosphate + H2O + H(+)(in) = 2 phosphate + 2 H(+)(out). In terms of biological role, proton pump that utilizes the energy of pyrophosphate hydrolysis as the driving force for proton movement across the membrane. Generates a proton motive force. In Rhizobium leguminosarum bv. trifolii, this protein is Pyrophosphate-energized proton pump 2 (hppA2).